A 115-amino-acid polypeptide reads, in one-letter code: ER exit protein (115 aa).

The protein belongs to the STEEP1 family.

Functionally, may stimulate membrane curvature formation and subsequent endoplasmic reticulum exit site (ERES) establishment. The sequence is that of ER exit protein from Schizosaccharomyces pombe (strain 972 / ATCC 24843) (Fission yeast).